The sequence spans 252 residues: Major prion protein (252 aa).

An N-terminal signal peptide occupies residues 1 to 22 (MANLGCWMLFLFVATWSDLGLC). Residues 23 to 38 (KKRPKPGGWNTGGSRY) form an interaction with ADGRG6 region. Residues 23–229 (KKRPKPGGWN…ESQAYYQRGS (207 aa)) are interaction with GRB2, ERI3 and SYN1. The disordered stretch occupies residues 26 to 106 (PKPGGWNTGG…QWNKPSKPKT (81 aa)). Tandem repeats lie at residues 51 to 58 (PQGGGWGQ), 59 to 66 (PHGGGWGQ), 67 to 74 (PHGGGWGQ), 75 to 82 (PHGGGWGQ), and 83 to 90 (PHGGGWGQ). Positions 51–90 (PQGGGWGQPHGGGWGQPHGGGWGQPHGGGWGQPHGGGWGQ) are 5 X 8 AA tandem repeats of P-H-G-G-G-W-G-Q. Residues 52 to 94 (QGGGWGQPHGGGWGQPHGGGWGQPHGGGWGQPHGGGWGQGGGT) are compositionally biased toward gly residues. Residues His60, Gly61, Gly62, His68, Gly69, Gly70, His76, Gly77, Gly78, His84, Gly85, and Gly86 each coordinate Cu(2+). A disulfide bond links Cys178 and Cys213. Asn180 and Asn196 each carry an N-linked (GlcNAc...) asparagine glycan. Ser229 is lipidated: GPI-anchor amidated serine. A propeptide spans 230-252 (SMVLFSSPPVILLISFLIFLIVG) (removed in mature form).

It belongs to the prion family. In terms of assembly, monomer and homodimer. Has a tendency to aggregate into amyloid fibrils containing a cross-beta spine, formed by a steric zipper of superposed beta-strands. Soluble oligomers may represent an intermediate stage on the path to fibril formation. Copper binding may promote oligomerization. Interacts with GRB2, APP, ERI3/PRNPIP and SYN1. Mislocalized cytosolically exposed PrP interacts with MGRN1; this interaction alters MGRN1 subcellular location and causes lysosomal enlargement. Interacts with APP. Interacts with KIAA1191. Interacts with ADGRG6.

Its subcellular location is the cell membrane. It is found in the golgi apparatus. In terms of biological role, its primary physiological function is unclear. May play a role in neuronal development and synaptic plasticity. May be required for neuronal myelin sheath maintenance. May promote myelin homeostasis through acting as an agonist for ADGRG6 receptor. May play a role in iron uptake and iron homeostasis. Soluble oligomers are toxic to cultured neuroblastoma cells and induce apoptosis (in vitro). Association with GPC1 (via its heparan sulfate chains) targets PRNP to lipid rafts. Also provides Cu(2+) or Zn(2+) for the ascorbate-mediated GPC1 deaminase degradation of its heparan sulfate side chains. The sequence is that of Major prion protein (PRNP) from Callithrix jacchus (White-tufted-ear marmoset).